The sequence spans 275 residues: 3-methyl-2-oxobutanoate hydroxymethyltransferase (275 aa).

The Mg(2+) site is built by aspartate 49 and aspartate 88. 3-methyl-2-oxobutanoate contacts are provided by residues 49–50 (DS), aspartate 88, and lysine 118. Glutamate 120 contributes to the Mg(2+) binding site. Glutamate 187 serves as the catalytic Proton acceptor.

Belongs to the PanB family. As to quaternary structure, homodecamer; pentamer of dimers. Mg(2+) serves as cofactor.

It is found in the cytoplasm. The catalysed reaction is 3-methyl-2-oxobutanoate + (6R)-5,10-methylene-5,6,7,8-tetrahydrofolate + H2O = 2-dehydropantoate + (6S)-5,6,7,8-tetrahydrofolate. Its pathway is cofactor biosynthesis; (R)-pantothenate biosynthesis; (R)-pantoate from 3-methyl-2-oxobutanoate: step 1/2. Functionally, catalyzes the reversible reaction in which hydroxymethyl group from 5,10-methylenetetrahydrofolate is transferred onto alpha-ketoisovalerate to form ketopantoate. This chain is 3-methyl-2-oxobutanoate hydroxymethyltransferase, found in Bordetella petrii (strain ATCC BAA-461 / DSM 12804 / CCUG 43448).